We begin with the raw amino-acid sequence, 144 residues long: Putative pre-16S rRNA nuclease (144 aa).

This sequence belongs to the YqgF nuclease family.

It is found in the cytoplasm. Its function is as follows. Could be a nuclease involved in processing of the 5'-end of pre-16S rRNA. The protein is Putative pre-16S rRNA nuclease of Oenococcus oeni (strain ATCC BAA-331 / PSU-1).